The following is a 142-amino-acid chain: Universal stress protein C (142 aa).

This sequence belongs to the universal stress protein A family.

The protein resides in the cytoplasm. Functionally, required for resistance to DNA-damaging agents. In Salmonella typhimurium (strain LT2 / SGSC1412 / ATCC 700720), this protein is Universal stress protein C (uspC).